The primary structure comprises 287 residues: 4-hydroxybenzoate octaprenyltransferase (287 aa).

A run of 6 helical transmembrane segments spans residues 30–50 (ALWI…FTVG), 89–109 (WEAV…ILPL), 133–153 (FFAI…PMAF), 158–178 (GHVP…SVAY), 199–221 (ALTF…LGIY), and 267–287 (NNWL…AGSF).

The protein belongs to the UbiA prenyltransferase family. Requires Mg(2+) as cofactor.

It is found in the cell inner membrane. The catalysed reaction is all-trans-octaprenyl diphosphate + 4-hydroxybenzoate = 4-hydroxy-3-(all-trans-octaprenyl)benzoate + diphosphate. The protein operates within cofactor biosynthesis; ubiquinone biosynthesis. Its function is as follows. Catalyzes the prenylation of para-hydroxybenzoate (PHB) with an all-trans polyprenyl group. Mediates the second step in the final reaction sequence of ubiquinone-8 (UQ-8) biosynthesis, which is the condensation of the polyisoprenoid side chain with PHB, generating the first membrane-bound Q intermediate 3-octaprenyl-4-hydroxybenzoate. The sequence is that of 4-hydroxybenzoate octaprenyltransferase from Paraburkholderia phytofirmans (strain DSM 17436 / LMG 22146 / PsJN) (Burkholderia phytofirmans).